Consider the following 198-residue polypeptide: Glycerol-3-phosphate acyltransferase (198 aa).

Transmembrane regions (helical) follow at residues 10–30 (LIPI…WILV), 57–77 (GISF…ILIL), 86–106 (IMYL…WFLF), 118–138 (VVLS…AVVF), and 160–180 (AVTE…IVLI).

This sequence belongs to the PlsY family. In terms of assembly, probably interacts with PlsX.

The protein localises to the cell inner membrane. The catalysed reaction is an acyl phosphate + sn-glycerol 3-phosphate = a 1-acyl-sn-glycero-3-phosphate + phosphate. It participates in lipid metabolism; phospholipid metabolism. Functionally, catalyzes the transfer of an acyl group from acyl-phosphate (acyl-PO(4)) to glycerol-3-phosphate (G3P) to form lysophosphatidic acid (LPA). This enzyme utilizes acyl-phosphate as fatty acyl donor, but not acyl-CoA or acyl-ACP. This Anaplasma marginale (strain St. Maries) protein is Glycerol-3-phosphate acyltransferase.